A 276-amino-acid polypeptide reads, in one-letter code: Secretagogin (276 aa).

5 consecutive EF-hand domains span residues 12–47 (LDAA…LLAK), 105–140 (DNSV…LFLH), 149–184 (ELEE…QENF), 197–232 (ERKR…MMEL), and 240–276 (VDLD…KINP). Residues Asp118, Asp120, Ser122, Glu129, Asp162, Asn164, Asp166, Arg168, Asp173, Asp210, Ser212, Thr214, Glu221, Asp254, Asn256, Asp258, Lys260, and Glu265 each contribute to the Ca(2+) site.

In terms of tissue distribution, highly expressed in pancreas, in particular in pancreatic islets and pancreatic beta-cells. Detected in prostate, adrenal gland, small intestine, stomach and thyroid (at protein level).

The protein localises to the cytoplasm. Its subcellular location is the secreted. It localises to the cytoplasmic vesicle. The protein resides in the secretory vesicle membrane. The chain is Secretagogin (Scgn) from Rattus norvegicus (Rat).